The chain runs to 166 residues: UPF0304 protein VF_1794 (166 aa).

The protein belongs to the UPF0304 family.

The chain is UPF0304 protein VF_1794 from Aliivibrio fischeri (strain ATCC 700601 / ES114) (Vibrio fischeri).